Here is an 89-residue protein sequence, read N- to C-terminus: Small ribosomal subunit protein uS15 (89 aa).

The protein belongs to the universal ribosomal protein uS15 family. As to quaternary structure, part of the 30S ribosomal subunit. Forms a bridge to the 50S subunit in the 70S ribosome, contacting the 23S rRNA.

In terms of biological role, one of the primary rRNA binding proteins, it binds directly to 16S rRNA where it helps nucleate assembly of the platform of the 30S subunit by binding and bridging several RNA helices of the 16S rRNA. Forms an intersubunit bridge (bridge B4) with the 23S rRNA of the 50S subunit in the ribosome. The protein is Small ribosomal subunit protein uS15 of Psychromonas ingrahamii (strain DSM 17664 / CCUG 51855 / 37).